Reading from the N-terminus, the 185-residue chain is Bacteriocin UviA (185 aa).

Functionally, may have a role in bacteriocin secretion or immunity. In Clostridium perfringens, this protein is Bacteriocin UviA (uviA).